The chain runs to 301 residues: 33 kDa chaperonin (301 aa).

Cystine bridges form between cysteine 239–cysteine 241 and cysteine 272–cysteine 275.

It belongs to the HSP33 family. In terms of processing, under oxidizing conditions two disulfide bonds are formed involving the reactive cysteines. Under reducing conditions zinc is bound to the reactive cysteines and the protein is inactive.

The protein resides in the cytoplasm. In terms of biological role, redox regulated molecular chaperone. Protects both thermally unfolding and oxidatively damaged proteins from irreversible aggregation. Plays an important role in the bacterial defense system toward oxidative stress. The polypeptide is 33 kDa chaperonin (Nostoc punctiforme (strain ATCC 29133 / PCC 73102)).